A 430-amino-acid chain; its full sequence is UDP-N-acetylmuramoylalanine--D-glutamate ligase (430 aa).

105–111 (GSNGKTT) contributes to the ATP binding site.

It belongs to the MurCDEF family.

The protein localises to the cytoplasm. The enzyme catalyses UDP-N-acetyl-alpha-D-muramoyl-L-alanine + D-glutamate + ATP = UDP-N-acetyl-alpha-D-muramoyl-L-alanyl-D-glutamate + ADP + phosphate + H(+). The protein operates within cell wall biogenesis; peptidoglycan biosynthesis. Cell wall formation. Catalyzes the addition of glutamate to the nucleotide precursor UDP-N-acetylmuramoyl-L-alanine (UMA). This Pseudothermotoga lettingae (strain ATCC BAA-301 / DSM 14385 / NBRC 107922 / TMO) (Thermotoga lettingae) protein is UDP-N-acetylmuramoylalanine--D-glutamate ligase.